Consider the following 67-residue polypeptide: Beta-defensin 1 (67 aa).

Positions 1 to 22 (MRIHYLLFAVLFLFLMPVPGEG) are cleaved as a signal peptide. 3 disulfide bridges follow: C33–C62, C40–C55, and C45–C63.

As to quaternary structure, monomer. Homodimer. As to expression, highly expressed in tongue, nasopharyngeal mucosa and skin, and to a lower extent in the Eustachian tube, lung and trachea.

The protein resides in the secreted. The protein localises to the membrane. Functionally, has antibacterial activity against Gram-positive bacterium S.pneumoniae Serotype 14. Is also active against Gram-negative bacteria M.catarrhalis 1857, and non-typeable H.influenzae strains 86-028NP and 1128. Has antifungal activity against C.albicans. May have a role in maintaining sterility in the middle ear. May act as a ligand for C-C chemokine receptor CCR6. Positively regulates the sperm motility and bactericidal activity in a CCR6-dependent manner. Binds to CCR6 and triggers Ca2+ mobilization in the sperm which is important for its motility. This chain is Beta-defensin 1 (DEFB1), found in Chinchilla lanigera (Long-tailed chinchilla).